The sequence spans 145 residues: D-aminoacyl-tRNA deacylase (145 aa).

Positions 137 to 138 (GP) match the Gly-cisPro motif, important for rejection of L-amino acids motif.

Belongs to the DTD family. In terms of assembly, homodimer.

It localises to the cytoplasm. It carries out the reaction glycyl-tRNA(Ala) + H2O = tRNA(Ala) + glycine + H(+). The catalysed reaction is a D-aminoacyl-tRNA + H2O = a tRNA + a D-alpha-amino acid + H(+). Functionally, an aminoacyl-tRNA editing enzyme that deacylates mischarged D-aminoacyl-tRNAs. Also deacylates mischarged glycyl-tRNA(Ala), protecting cells against glycine mischarging by AlaRS. Acts via tRNA-based rather than protein-based catalysis; rejects L-amino acids rather than detecting D-amino acids in the active site. By recycling D-aminoacyl-tRNA to D-amino acids and free tRNA molecules, this enzyme counteracts the toxicity associated with the formation of D-aminoacyl-tRNA entities in vivo and helps enforce protein L-homochirality. This chain is D-aminoacyl-tRNA deacylase, found in Shewanella putrefaciens (strain CN-32 / ATCC BAA-453).